Consider the following 102-residue polypeptide: Defensin (102 aa).

Positions 1–25 (MKCATIVCTIAVVLAATLLNGSVQA) are cleaved as a signal peptide. The propeptide occupies 26–62 (APQEEAALSGGANLNTLLDELPEETHHAALENYRAKR). 3 disulfides stabilise this stretch: Cys65–Cys92, Cys78–Cys98, and Cys82–Cys100.

This sequence belongs to the invertebrate defensin family. Type 1 subfamily.

Its subcellular location is the secreted. In terms of biological role, responsible for the anti Gram-positive activity of immune hemolymph. The sequence is that of Defensin (Def1) from Anopheles gambiae (African malaria mosquito).